A 427-amino-acid chain; its full sequence is Zinc-finger homeodomain protein 7 (427 aa).

Disordered stretches follow at residues 1 to 60 (MEYK…SLMD) and 91 to 118 (LHAAHHHGQGRRVEAPGGESQHHLQRHH). Residues 10–28 (EEEEEEEEEEDDEEEDEEE) are compositionally biased toward acidic residues. Positions 50–60 (SSASSPSSLMD) are enriched in low complexity. The ZF-HD dimerization-type; degenerate zinc-finger motif lies at 163–211 (YRECLKNHAARMGAHVLDGCGEFMSSPGDGAAALACAACGCHRSFHRRE). Disordered stretches follow at residues 264–320 (KRPP…SKKR) and 375–427 (HLAK…QHDA). Composition is skewed to low complexity over residues 271–283 (VSPASAPAALAES) and 301–312 (HAAAVVAASASA). A DNA-binding region (homeobox) is located at residues 318-381 (KKRFRTKFTA…NNKHLAKTPP (64 aa)). Residues 380 to 401 (PPSPTSQPPPPPLHHDPSPPPP) are compositionally biased toward pro residues. The segment covering 402-416 (PHHHHHHHHHHHPPQ) has biased composition (basic residues). Residues 417–427 (HHQQQQQQHDA) show a composition bias toward low complexity.

Homo- and heterodimer with other ZFHD proteins.

The protein localises to the nucleus. Functionally, putative transcription factor. The protein is Zinc-finger homeodomain protein 7 (ZHD7) of Oryza sativa subsp. japonica (Rice).